The sequence spans 412 residues: Transcription factor IIIA (412 aa).

Positions 1 to 20 (MSESDETKSISSLISSSSSS) are disordered. The span at 9–20 (SISSLISSSSSS) shows a compositional bias: low complexity. 7 consecutive C2H2-type zinc fingers follow at residues 25–49 (YICT…LRTH), 55–79 (YKCT…IVSH), 85–107 (FHCS…EITH), 111–136 (FKCT…LSVH), 140–162 (LTCK…KLKH), 169–194 (YQCD…KQSH), and 197–219 (LKCP…MLSH). Residues 228 to 252 (WTCDYCDVGKFAKKNELVEHYNIFH) form a C2H2-type 8; degenerate zinc finger. The segment at 285-316 (LETEKLKVEEDEEDEEDSLDEKRSDVRSDSMS) is disordered. Over residues 293–303 (EEDEEDEEDSL) the composition is skewed to acidic residues. The C2H2-type 9 zinc-finger motif lies at 345–369 (INCPKNNCDRMFSREYDLRRHLKWH).

The protein localises to the nucleus. Transcription factor required for transcription of 5S rRNA by RNA polymerase III. This Candida albicans (strain SC5314 / ATCC MYA-2876) (Yeast) protein is Transcription factor IIIA (PZF1).